Here is a 684-residue protein sequence, read N- to C-terminus: MLKCICRVYSQPLAQMVTSPLFKHMGSAGTYTILPITNLRHLSTKNCPLKIKSNRSEPLQFGDFERQVPCSRKSGSSKNVQKRLYELRQLKTVLSETFGVTEYASFFESLRNALHINNCSENEKKKLLYDIILHQHELYPEVARKIGFYLPGEVHRWFWYHIPKSESFNHYLFLLKSDVLLFTSNYCTRFTNRLIKGTEMERQLATFQIFLHDETNIKFIMEKVLKLHTFDSLIALVNGLVKAKNFRFIKVFIQALLQKLEQHCYSGKDGAKQKNLRYVKFNNTLLYYLLKSGNVELFIKTFQEELKFIVSSGLLNHIDGNEHILNFPIHHYLNLLRISNRQEELFNVISCLQSSPLMKYKLFKEFLMGELIASFQAFRDPKLVCKYLLSSYSSKASANILNALGIWGWLYHSKSTTLTAPTLARELKNKNNILPNTMRIGSPVTVPILTELYRSLLSSSSVSLESGQFKNCLLDLYYKYKSFLSEEAHKYRYWRNDTGILNVFLNYIRFQAREPRLAYNVLLDFYSQPFAKKVVLTTTLCPFSIVAYKNHTLTQAELSELLQVMHKNGVPLTFKFCSAMVMHYVKMRDEKGARSWYNKILFGGFEIRHMALIQIIKDQGWPFPKNFDETLLTELVENNNIKEPTDSTLFTDEDMFEEDGKPRFNDDDVNKCTNIIRETLKSLN.

The transit peptide at 1-56 directs the protein to the mitochondrion; sequence MLKCICRVYSQPLAQMVTSPLFKHMGSAGTYTILPITNLRHLSTKNCPLKIKSNRS.

Belongs to the ATP22 family.

The protein resides in the mitochondrion inner membrane. Functionally, translation factor specific for subunit 6 of the mitochondrial ATPase. Required for assembly of the CF(0) component of the ATPase. The polypeptide is Mitochondrial translation factor ATP22 (ATP22) (Saccharomyces cerevisiae (strain YJM789) (Baker's yeast)).